Here is a 581-residue protein sequence, read N- to C-terminus: Zinc finger protein 319 (581 aa).

Over residues 1–22 the composition is skewed to low complexity; the sequence is MSESWQQPPQTQPQQPQAPQPQ. Positions 1-39 are disordered; that stretch reads MSESWQQPPQTQPQQPQAPQPQHHAETPPALAEHTLPPG. A C2H2-type 1 zinc finger spans residues 75–99; the sequence is PKCGVCGHDLAHLSSPHEHQCLAGH. A C2H2-type 2; degenerate zinc finger spans residues 103 to 125; that stretch reads FQCTQCLKIFHQATDLLEHQCVQ. Lys129 participates in a covalent cross-link: Glycyl lysine isopeptide (Lys-Gly) (interchain with G-Cter in SUMO2). 4 consecutive C2H2-type zinc fingers follow at residues 131 to 153, 201 to 223, 229 to 251, and 257 to 279; these read FVCGVCKMGFSLLTSLAQHHSSH, YSCPVCQKPFKHLSELSRHERIH, YKCTLCDKSFSQSSHLVHHKRTH, and YKCAVCEKTFKHRSHLVRHMYAH. Ser280 bears the Phosphoserine mark. A C2H2-type 7; degenerate zinc finger spans residues 286 to 308; that stretch reads FRCNVCELHFKESSELLQHPCTP. 3 consecutive C2H2-type zinc fingers follow at residues 314 to 336, 342 to 364, and 370 to 392; these read FRCGECQKAFKRPSDLRQHERTH, FKCDLCPMGFKQQYALMRHRRTH, and FKCGLCEKGFGQPSHLLYHQHVH. A C2H2-type 11; degenerate zinc finger spans residues 398 to 420; that stretch reads FKCPVCQKGFDQSAELLRHKCLP. The C2H2-type 12 zinc finger occupies 427-449; it reads FKCPVCNKAYKRASALQKHQLSH. Residues 457–479 form a C2H2-type 13; degenerate zinc finger; the sequence is LRCTLCERRFFSSSEFVQHRCDP. 3 C2H2-type zinc fingers span residues 485–507, 513–535, and 541–563; these read LKCPDCEKRFKYASDLQRHRRVH, YKCPSCDKAFKQREHLNKHQGVH, and FKCVWCGERFLDVALLQEHSAQH.

This sequence belongs to the krueppel C2H2-type zinc-finger protein family.

The protein resides in the nucleus. Functionally, may be involved in transcriptional regulation. The sequence is that of Zinc finger protein 319 (Znf319) from Mus musculus (Mouse).